The following is a 532-amino-acid chain: Protein FAM227B (532 aa).

Residues 432–482 (DNKKDFKRVKQRIKDDIKFLREQQELIDKELDRIQAKASKNLQEVKNEFEN) adopt a coiled-coil conformation. The tract at residues 494 to 532 (KEEYGGSTSASESPQSMQSPQSSSSFPTISEDFNNVEEG) is disordered. Over residues 500–523 (STSASESPQSMQSPQSSSSFPTIS) the composition is skewed to low complexity.

It belongs to the FAM227 family.

In Mus musculus (Mouse), this protein is Protein FAM227B (Fam227b).